The sequence spans 194 residues: Large ribosomal subunit protein bL25 (194 aa).

It belongs to the bacterial ribosomal protein bL25 family. CTC subfamily. Part of the 50S ribosomal subunit; part of the 5S rRNA/L5/L18/L25 subcomplex. Contacts the 5S rRNA. Binds to the 5S rRNA independently of L5 and L18.

This is one of the proteins that binds to the 5S RNA in the ribosome where it forms part of the central protuberance. The sequence is that of Large ribosomal subunit protein bL25 from Neorickettsia sennetsu (strain ATCC VR-367 / Miyayama) (Ehrlichia sennetsu).